A 261-amino-acid polypeptide reads, in one-letter code: Small ribosomal subunit protein eS1 (261 aa).

Positions 1 to 18 are enriched in basic residues; the sequence is MAVGKNKRISKGKKGGKK. A disordered region spans residues 1–21; that stretch reads MAVGKNKRISKGKKGGKKKAT.

Belongs to the eukaryotic ribosomal protein eS1 family. In terms of assembly, component of the small ribosomal subunit. Mature ribosomes consist of a small (40S) and a large (60S) subunit. The 40S subunit contains about 33 different proteins and 1 molecule of RNA (18S). The 60S subunit contains about 49 different proteins and 3 molecules of RNA (25S, 5.8S and 5S).

It localises to the cytoplasm. In Daucus carota (Wild carrot), this protein is Small ribosomal subunit protein eS1 (cyc07).